Here is a 329-residue protein sequence, read N- to C-terminus: Putative helicase 109L (329 aa).

Positions 105–259 constitute a Helicase ATP-binding domain; that stretch reads LTLLTQHKSC…LFDMFFGPEM (155 aa). Residue 118-125 participates in ATP binding; that stretch reads CYTGFGKT. The DEAH box motif lies at 212–215; sequence DEAH.

Belongs to the DEAD box helicase family. DEAH subfamily.

This chain is Putative helicase 109L, found in Invertebrate iridescent virus 3 (IIV-3).